A 273-amino-acid chain; its full sequence is Proteasome subunit beta type-10 (273 aa).

Position 1 is an N-acetylmethionine (Met1). The propeptide at 1–39 (MLKQAVEPTGGFSFENCQRNASLEHVLPGLRVPHARKTG) is removed in mature form. Thr40 functions as the Nucleophile in the catalytic mechanism.

Belongs to the peptidase T1B family. The 26S proteasome consists of a 20S proteasome core and two 19S regulatory subunits. The 20S proteasome core is composed of 28 subunits that are arranged in four stacked rings, resulting in a barrel-shaped structure. The two end rings are each formed by seven alpha subunits, and the two central rings are each formed by seven beta subunits. The catalytic chamber with the active sites is on the inside of the barrel. Component of the immunoproteasome, where it displaces the equivalent housekeeping subunit PSMB7. Component of the spermatoproteasome, a form of the proteasome specifically found in testis. Autocleaved. The resulting N-terminal Thr residue of the mature subunit is responsible for the nucleophile proteolytic activity. Detected in liver (at protein level).

It is found in the cytoplasm. Its subcellular location is the nucleus. The enzyme catalyses Cleavage of peptide bonds with very broad specificity.. Functionally, the proteasome is a multicatalytic proteinase complex which is characterized by its ability to cleave peptides with Arg, Phe, Tyr, Leu, and Glu adjacent to the leaving group at neutral or slightly basic pH. The proteasome has an ATP-dependent proteolytic activity. This subunit is involved in antigen processing to generate class I binding peptides. Plays a role in determining the T-cell repertoire for an antiviral T-cell response. In Mus musculus (Mouse), this protein is Proteasome subunit beta type-10 (Psmb10).